The primary structure comprises 99 residues: NADH-ubiquinone oxidoreductase chain 4L (99 aa).

The next 3 helical transmembrane spans lie at 5–25 (IITA…GFII), 30–50 (ILLL…IIIC), and 65–85 (LYIL…LVLF).

This sequence belongs to the complex I subunit 4L family.

The protein resides in the mitochondrion membrane. It catalyses the reaction a ubiquinone + NADH + 5 H(+)(in) = a ubiquinol + NAD(+) + 4 H(+)(out). Its function is as follows. Core subunit of the mitochondrial membrane respiratory chain NADH dehydrogenase (Complex I) that is believed to belong to the minimal assembly required for catalysis. Complex I functions in the transfer of electrons from NADH to the respiratory chain. The immediate electron acceptor for the enzyme is believed to be ubiquinone. This is NADH-ubiquinone oxidoreductase chain 4L (ND4L) from Allomyces macrogynus.